We begin with the raw amino-acid sequence, 201 residues long: MFNSISGILSGKTTDSVYVENSGIEWEIFVSALALDALGTVGKEVKVYTWLYHREDQMRLFGFPNQAERSLFLDLTKVEGVGPRQALKIMSGLNSSSLEKALEEGDLDTLQKAPGVGKKTAQKMILALKGKLTNLNEVSSKGQASVSCEYEDIVTALTEMGFERKSVIVQVEKIAEEMKAAGSDPLKNEEELFRRSIVALS.

The domain I stretch occupies residues 1-64; it reads MFNSISGILS…EDQMRLFGFP (64 aa). Residues 65-140 are domain II; sequence NQAERSLFLD…KLTNLNEVSS (76 aa). The flexible linker stretch occupies residues 140–144; it reads SKGQA. Residues 145–201 are domain III; the sequence is SVSCEYEDIVTALTEMGFERKSVIVQVEKIAEEMKAAGSDPLKNEEELFRRSIVALS.

This sequence belongs to the RuvA family. In terms of assembly, homotetramer. Forms an RuvA(8)-RuvB(12)-Holliday junction (HJ) complex. HJ DNA is sandwiched between 2 RuvA tetramers; dsDNA enters through RuvA and exits via RuvB. An RuvB hexamer assembles on each DNA strand where it exits the tetramer. Each RuvB hexamer is contacted by two RuvA subunits (via domain III) on 2 adjacent RuvB subunits; this complex drives branch migration. In the full resolvosome a probable DNA-RuvA(4)-RuvB(12)-RuvC(2) complex forms which resolves the HJ.

Its subcellular location is the cytoplasm. The RuvA-RuvB-RuvC complex processes Holliday junction (HJ) DNA during genetic recombination and DNA repair, while the RuvA-RuvB complex plays an important role in the rescue of blocked DNA replication forks via replication fork reversal (RFR). RuvA specifically binds to HJ cruciform DNA, conferring on it an open structure. The RuvB hexamer acts as an ATP-dependent pump, pulling dsDNA into and through the RuvAB complex. HJ branch migration allows RuvC to scan DNA until it finds its consensus sequence, where it cleaves and resolves the cruciform DNA. This chain is Holliday junction branch migration complex subunit RuvA, found in Treponema denticola (strain ATCC 35405 / DSM 14222 / CIP 103919 / JCM 8153 / KCTC 15104).